The following is a 153-amino-acid chain: Large ribosomal subunit protein uL13 (153 aa).

This sequence belongs to the universal ribosomal protein uL13 family. As to quaternary structure, part of the 50S ribosomal subunit.

In terms of biological role, this protein is one of the early assembly proteins of the 50S ribosomal subunit, although it is not seen to bind rRNA by itself. It is important during the early stages of 50S assembly. The polypeptide is Large ribosomal subunit protein uL13 (Azorhizobium caulinodans (strain ATCC 43989 / DSM 5975 / JCM 20966 / LMG 6465 / NBRC 14845 / NCIMB 13405 / ORS 571)).